A 410-amino-acid chain; its full sequence is MSEPAVVSILDTDLYKLTMLQAVLEHYPDAQVSYKYTNRSPKMALNQEAYNWLREQIRGLRNLHLLPEEEQWLRKNCPYLKESFYEFMHEFEFDPENSISLNYDSETKDLSIFIHGLWKNTIFYEIPLLALVSESYFKFVDKDWSPEGQFEKAYEKGKRLIRAGCAFTDFGTRRRRDPHTQEIVLQGLMKAQEDFKGPGSFLGTSNVYFAAKYNLNVSGTVAHEWYMGIAAITQNYKQANRIASLKWVQTFGTSLLIALTDTFSTDVFLKSFTANSADDLANVFHGVRQDSGCAEEYIEKVVKHYKSIGVDPSTKVIVHSDALNVDRCIELYKYCEKCGIKSAFGIGTNLTSDFQKVSNPSEVSKPMNIVIKLFSAEGTKAVKISDDIMKNTGDRDAVIQAKHQLCLPIA.

The nicotinate site is built by Tyr15, Phe170, and Thr220. The residue at position 223 (His223) is a Phosphohistidine. Thr348 contacts 5-phospho-alpha-D-ribose 1-diphosphate.

It belongs to the NAPRTase family. Requires Mg(2+) as cofactor. The cofactor is Mn(2+). Transiently phosphorylated on a His residue during the reaction cycle. Phosphorylation strongly increases the affinity for substrates and increases the rate of nicotinate D-ribonucleotide production. Dephosphorylation regenerates the low-affinity form of the enzyme, leading to product release.

The enzyme catalyses nicotinate + 5-phospho-alpha-D-ribose 1-diphosphate + ATP + H2O = nicotinate beta-D-ribonucleotide + ADP + phosphate + diphosphate. It participates in cofactor biosynthesis; NAD(+) biosynthesis; nicotinate D-ribonucleotide from nicotinate: step 1/1. Its function is as follows. Catalyzes the first step in the biosynthesis of NAD from nicotinic acid, the ATP-dependent synthesis of beta-nicotinate D-ribonucleotide from nicotinate and 5-phospho-D-ribose 1-phosphate. Helps prevent cellular oxidative stress via its role in NAD biosynthesis. This chain is Probable nicotinate phosphoribosyltransferase, found in Schizosaccharomyces pombe (strain 972 / ATCC 24843) (Fission yeast).